Consider the following 1025-residue polypeptide: Transcription factor tau 131 kDa subunit (1025 aa).

Over residues 1 to 26 (MAAGKLKKEQQNQSAERESADTGKVN) the composition is skewed to basic and acidic residues. Positions 1–71 (MAAGKLKKEQ…EDEYNSERDS (71 aa)) are disordered. Over residues 46 to 65 (DEEYDDEDVPHDLQLSEDEY) the composition is skewed to acidic residues. TPR repeat units follow at residues 128-161 (VAQL…DARN), 162-195 (FAAY…NASD), 196-229 (WEFW…NPME), 230-263 (WESI…NPYD), and 264-297 (ANIL…NVER). Positions 128–569 (VAQLLSQANE…VDVVEMRKHQ (442 aa)) are sufficient to bind BDP1. A disordered region spans residues 309–334 (LDSSDEESAAEGEDADEKEPLEQDED). At serine 311 the chain carries Phosphoserine. Acidic residues predominate over residues 311–325 (SSDEESAAEGEDADE). TPR repeat units follow at residues 432–465 (IDIR…TFSD), 467–501 (ADLY…EWRT), 502–535 (TDVF…EPDD), 536–569 (LDIR…RKHQ), 875–908 (PYLY…IPDD), and 959–992 (QEAD…YDDG).

Component of the TFIIIC complex composed of TFC1, TFC3, TFC4, TFC6, TFC7 and TFC8. The subunits are organized in two globular domains, tauA and tauB, connected by a proteolysis-sensitive and flexible linker. Interacts with TFC1, TFC3, TFC6, TFIIIB subunits BRF1 and BDP1, and with RNA polymerase III subunit RPC10. Phosphorylated.

Its subcellular location is the nucleus. Its function is as follows. TFIIIC mediates tRNA and 5S RNA gene activation by binding to intragenic promoter elements. Upstream of the transcription start site, TFIIIC assembles the initiation complex TFIIIB-TFIIIC-tDNA, which is sufficient for RNA polymerase III recruitment and function. Part of the tauA domain of TFIIIC that binds boxA DNA promoter sites of tRNA and similar genes. TFC4 is the TFIIIB-assembling subunit of TFIIIC and essential for viability. In Saccharomyces cerevisiae (strain ATCC 204508 / S288c) (Baker's yeast), this protein is Transcription factor tau 131 kDa subunit (TFC4).